The following is a 123-amino-acid chain: Phospholipase A2 (123 aa).

Cystine bridges form between Cys11–Cys77, Cys27–Cys123, Cys29–Cys45, Cys44–Cys105, Cys51–Cys98, Cys61–Cys91, and Cys84–Cys96. 3 residues coordinate Ca(2+): Tyr28, Gly30, and Gly32. His48 is an active-site residue. Asp49 is a Ca(2+) binding site. Asp99 is an active-site residue.

The protein belongs to the phospholipase A2 family. As to quaternary structure, monomer or homodimer. It depends on Ca(2+) as a cofactor. In terms of processing, activated by trypsin cleavage in the duodenum. Can also be activated by thrombin or autocatalytically.

Its subcellular location is the secreted. It carries out the reaction a 1,2-diacyl-sn-glycero-3-phosphocholine + H2O = a 1-acyl-sn-glycero-3-phosphocholine + a fatty acid + H(+). The catalysed reaction is 1,2-ditetradecanoyl-sn-glycero-3-phosphocholine + H2O = 1-tetradecanoyl-sn-glycero-3-phosphocholine + tetradecanoate + H(+). It catalyses the reaction 1,2-dihexadecanoyl-sn-glycero-3-phosphocholine + H2O = 1-hexadecanoyl-sn-glycero-3-phosphocholine + hexadecanoate + H(+). The enzyme catalyses 1-hexadecanoyl-2-(9Z-octadecenoyl)-sn-glycero-3-phosphocholine + H2O = 1-hexadecanoyl-sn-glycero-3-phosphocholine + (9Z)-octadecenoate + H(+). It carries out the reaction 1-hexadecanoyl-2-(5Z,8Z,11Z,14Z-eicosatetraenoyl)-sn-glycero-3-phosphocholine + H2O = 1-hexadecanoyl-sn-glycero-3-phosphocholine + (5Z,8Z,11Z,14Z)-eicosatetraenoate + H(+). The catalysed reaction is 1-hexadecanoyl-2-(9Z-octadecenoyl)-sn-glycero-3-phospho-(1'-sn-glycerol) + H2O = 1-hexadecanoyl-sn-glycero-3-phospho-(1'-sn-glycerol) + (9Z)-octadecenoate + H(+). It catalyses the reaction N-hexadecanoyl-1,2-di-(9Z-octadecenoyl)-sn-glycero-3-phosphoethanolamine + H2O = N-hexadecanoyl-1-(9Z-octadecenoyl)-sn-glycero-3-phosphoethanolamine + (9Z)-octadecenoate + H(+). The enzyme catalyses 1-hexadecanoyl-2-(9Z,12Z-octadecadienoyl)-sn-glycero-3-phosphoethanolamine + H2O = 1-hexadecanoyl-sn-glycero-3-phosphoethanolamine + (9Z,12Z)-octadecadienoate + H(+). It carries out the reaction N,1-dihexadecanoyl-2-(9Z,12Z-octadecadienoyl)-sn-glycero-3-phosphoethanolamine + H2O = N,1-dihexadecanoyl-sn-glycero-3-phosphoethanolamine + (9Z,12Z)-octadecadienoate + H(+). In terms of biological role, secretory calcium-dependent phospholipase A2 that primarily targets dietary phospholipids in the intestinal tract. Hydrolyzes the ester bond of the fatty acyl group attached at sn-2 position of phospholipids (phospholipase A2 activity) with preference for phosphatidylethanolamines and phosphatidylglycerols over phosphatidylcholines. May play a role in the biosynthesis of N-acyl ethanolamines that regulate energy metabolism and inflammation in the intestinal tract. Hydrolyzes N-acyl phosphatidylethanolamines to N-acyl lysophosphatidylethanolamines, which are further cleaved by a lysophospholipase D to release N-acyl ethanolamines. May act in an autocrine and paracrine manner. Has anti-helminth activity in a process regulated by gut microbiota. Upon helminth infection of intestinal epithelia, directly affects phosphatidylethanolamine contents in the membrane of helminth larvae, likely controlling an array of phospholipid-mediated cellular processes such as membrane fusion and cell division while providing for better immune recognition, ultimately reducing larvae integrity and infectivity. This chain is Phospholipase A2 (PLA2G1B), found in Ovis aries (Sheep).